Consider the following 247-residue polypeptide: DNA polymerase sliding clamp 1 (247 aa).

This sequence belongs to the PCNA family. As to quaternary structure, homotrimer. The subunits circularize to form a toroid; DNA passes through its center. Replication factor C (RFC) is required to load the toroid on the DNA.

In terms of biological role, sliding clamp subunit that acts as a moving platform for DNA processing. Responsible for tethering the catalytic subunit of DNA polymerase and other proteins to DNA during high-speed replication. In Sulfolobus acidocaldarius (strain ATCC 33909 / DSM 639 / JCM 8929 / NBRC 15157 / NCIMB 11770), this protein is DNA polymerase sliding clamp 1.